Reading from the N-terminus, the 91-residue chain is Putative septation protein SpoVG (91 aa).

The protein belongs to the SpoVG family.

In terms of biological role, could be involved in septation. In Clostridium beijerinckii (strain ATCC 51743 / NCIMB 8052) (Clostridium acetobutylicum), this protein is Putative septation protein SpoVG.